A 650-amino-acid chain; its full sequence is ATP-dependent DNA helicase PIF1 (650 aa).

A PINT region spans residues 14–192 (MPSSTEAATD…ALEKRPMESQ (179 aa)). Phosphoserine is present on residues Ser40 and Ser164. The disordered stretch occupies residues 171 to 199 (LQRAAATKAPDSALEKRPMESQTSTEAPR). 237-244 (GSAGTGKS) lines the ATP pocket. The DNA-binding element occupies 586 to 605 (QAYVALSRARSLQGLRVLDF). The disordered stretch occupies residues 631 to 650 (LESQDDEEANSDLENMDPNL). Residues 633-650 (SQDDEEANSDLENMDPNL) show a composition bias toward acidic residues.

The protein belongs to the helicase family. PIF1 subfamily. As to quaternary structure, monomer. Interacts with telomerase. Requires Mg(2+) as cofactor.

It localises to the nucleus. The protein localises to the mitochondrion. The enzyme catalyses Couples ATP hydrolysis with the unwinding of duplex DNA at the replication fork by translocating in the 5'-3' direction. This creates two antiparallel DNA single strands (ssDNA). The leading ssDNA polymer is the template for DNA polymerase III holoenzyme which synthesizes a continuous strand.. It catalyses the reaction ATP + H2O = ADP + phosphate + H(+). DNA-dependent ATPase and 5'-3' DNA helicase required for the maintenance of both mitochondrial and nuclear genome stability. Efficiently unwinds G-quadruplex (G4) DNA structures and forked RNA-DNA hybrids. Resolves G4 structures, preventing replication pausing and double-strand breaks (DSBs) at G4 motifs. Involved in the maintenance of telomeric DNA. Inhibits telomere elongation, de novo telomere formation and telomere addition to DSBs via catalytic inhibition of telomerase. Reduces the processivity of telomerase by displacing active telomerase from DNA ends. Releases telomerase by unwinding the short telomerase RNA/telomeric DNA hybrid that is the intermediate in the telomerase reaction. Possesses an intrinsic strand annealing activity. This is ATP-dependent DNA helicase PIF1 from Mus musculus (Mouse).